A 398-amino-acid polypeptide reads, in one-letter code: Phytoene synthase, chloroplastic (398 aa).

Belongs to the phytoene/squalene synthase family. Monomer.

It is found in the plastid. It localises to the chloroplast. The enzyme catalyses 2 (2E,6E,10E)-geranylgeranyl diphosphate = 15-cis-phytoene + 2 diphosphate. Its pathway is carotenoid biosynthesis; phytoene biosynthesis; all-trans-phytoene from geranylgeranyl diphosphate: step 1/1. Its function is as follows. Catalyzes the reaction from prephytoene diphosphate to phytoene. This Daucus carota (Wild carrot) protein is Phytoene synthase, chloroplastic (PSY).